Consider the following 78-residue polypeptide: MTLNEAIKDKTYEIVEIANCDEALKKRFLSFGIHEGVQCTLLHSSMKKATLSIKINRIQVALRSHEAQYLIIKESAQE.

This sequence belongs to the FeoA family.

Might be involved in Fe(2+) ion uptake. The polypeptide is Putative Fe(2+) transport protein A (Helicobacter pylori (strain J99 / ATCC 700824) (Campylobacter pylori J99)).